The chain runs to 501 residues: ATP synthase subunit alpha (501 aa).

Residue 169-176 (GDRQTGKT) participates in ATP binding.

It belongs to the ATPase alpha/beta chains family. As to quaternary structure, F-type ATPases have 2 components, CF(1) - the catalytic core - and CF(0) - the membrane proton channel. CF(1) has five subunits: alpha(3), beta(3), gamma(1), delta(1), epsilon(1). CF(0) has three main subunits: a(1), b(2) and c(9-12). The alpha and beta chains form an alternating ring which encloses part of the gamma chain. CF(1) is attached to CF(0) by a central stalk formed by the gamma and epsilon chains, while a peripheral stalk is formed by the delta and b chains.

It is found in the cell membrane. The enzyme catalyses ATP + H2O + 4 H(+)(in) = ADP + phosphate + 5 H(+)(out). Produces ATP from ADP in the presence of a proton gradient across the membrane. The alpha chain is a regulatory subunit. This is ATP synthase subunit alpha from Streptococcus pyogenes serotype M2 (strain MGAS10270).